The primary structure comprises 59 residues: Antibacterial peptide enbocin (59 aa).

Residues 1-20 form the signal peptide; that stretch reads MNFTRIIFFLFVVVFATASG. Residue K21 is a propeptide. At S58 the chain carries Serine amide.

This sequence belongs to the cecropin family.

The protein localises to the secreted. Functionally, has antibacterial activity against Gram-positive and Gram-negative bacteria. This is Antibacterial peptide enbocin from Bombyx mori (Silk moth).